The following is a 158-amino-acid chain: MALITTGNGLIRDLEKFGALGVYVPLEGGYEGRYQRRLRAAGYTTLHITAKGLGDVAAYLTRIHGVRPPHLGKKSTGSGAAVGQVYYLPPILDSHLEQLPPKSKGLVLWIIEGHILSNEELEYLTNLPQLEPRVKVVIERGGDRAFRWTSLEKTLLAS.

This sequence belongs to the complex I NdhN subunit family. As to quaternary structure, NDH-1 can be composed of about 15 different subunits; different subcomplexes with different compositions have been identified which probably have different functions.

It is found in the cellular thylakoid membrane. The enzyme catalyses a plastoquinone + NADH + (n+1) H(+)(in) = a plastoquinol + NAD(+) + n H(+)(out). The catalysed reaction is a plastoquinone + NADPH + (n+1) H(+)(in) = a plastoquinol + NADP(+) + n H(+)(out). Its function is as follows. NDH-1 shuttles electrons from an unknown electron donor, via FMN and iron-sulfur (Fe-S) centers, to quinones in the respiratory and/or the photosynthetic chain. The immediate electron acceptor for the enzyme in this species is believed to be plastoquinone. Couples the redox reaction to proton translocation, and thus conserves the redox energy in a proton gradient. Cyanobacterial NDH-1 also plays a role in inorganic carbon-concentration. The chain is NAD(P)H-quinone oxidoreductase subunit N from Nostoc punctiforme (strain ATCC 29133 / PCC 73102).